The chain runs to 287 residues: MNVFQMRDKLKDRLNHLDVKFSFNREDETLRISRIDNGKGVTVKINPIVAKYKSQKEKIVDEIVYYVEEAVEQMKGEALENTDNIQIMPVLRSPSFDKKDKNGNSFVIDAHTAETNIYYAVDLGKSYRLIDEAMLEELKLTKQQLKEMALFNVRKLENKYTTDEVKGNIFYFVNSNDGYDASRILNTSFLNEIQAQCEGEMLVAVPHQDVLIIADIRNKTGYDVMAHLTMEFFTKGLVPITSLSLGYDKGHFEPIFILGKNNKQKRDPNVIQRLEATRKQYENKDKK.

It belongs to the UPF0354 family.

The polypeptide is UPF0354 protein SSP1020 (Staphylococcus saprophyticus subsp. saprophyticus (strain ATCC 15305 / DSM 20229 / NCIMB 8711 / NCTC 7292 / S-41)).